The following is a 237-amino-acid chain: Class B acid phosphatase (237 aa).

A signal peptide spans 1 to 23 (MRKVTLTLSAIALALSLNGAAMA). The active-site Nucleophile is aspartate 69. Positions 69 and 71 each coordinate Mg(2+). Aspartate 71 (proton donor) is an active-site residue. Substrate contacts are provided by residues 137–138 (TG) and lysine 177. Residue aspartate 192 participates in Mg(2+) binding.

Belongs to the class B bacterial acid phosphatase family. In terms of assembly, homotetramer. Requires Mg(2+) as cofactor.

Its subcellular location is the periplasm. The catalysed reaction is a phosphate monoester + H2O = an alcohol + phosphate. Its function is as follows. Dephosphorylates several organic phosphate monoesters. Also has a phosphotransferase activity catalyzing the transfer of low-energy phosphate groups from organic phosphate monoesters to free hydroxyl groups of various organic compounds. In Proteus mirabilis (strain HI4320), this protein is Class B acid phosphatase.